The sequence spans 829 residues: Probable beta-glucosidase H (829 aa).

Asn-13 carries an N-linked (GlcNAc...) asparagine glycan. Residue Asp-225 is part of the active site. N-linked (GlcNAc...) asparagine glycans are attached at residues Asn-304, Asn-473, Asn-602, Asn-627, and Asn-664. Positions 389 to 548 constitute a PA14 domain; it reads RMLSNAVIHF…DPEQMVANAV (160 aa).

Belongs to the glycosyl hydrolase 3 family.

Its subcellular location is the secreted. It carries out the reaction Hydrolysis of terminal, non-reducing beta-D-glucosyl residues with release of beta-D-glucose.. It participates in glycan metabolism; cellulose degradation. Beta-glucosidases are one of a number of cellulolytic enzymes involved in the degradation of cellulosic biomass. Catalyzes the last step releasing glucose from the inhibitory cellobiose. The sequence is that of Probable beta-glucosidase H (bglH) from Aspergillus fumigatus (strain ATCC MYA-4609 / CBS 101355 / FGSC A1100 / Af293) (Neosartorya fumigata).